A 431-amino-acid chain; its full sequence is Tyrosine--tRNA ligase (431 aa).

Tyrosine 34 contacts L-tyrosine. The 'HIGH' region signature appears at 39–48; it reads PTADSLHIGH. L-tyrosine contacts are provided by tyrosine 171 and glutamine 175. The 'KMSKS' region signature appears at 231 to 235; sequence KFGKT. Lysine 234 contacts ATP. Residues 353-422 enclose the S4 RNA-binding domain; sequence INAVEALVKT…GKYTILRRGK (70 aa).

It belongs to the class-I aminoacyl-tRNA synthetase family. TyrS type 1 subfamily. As to quaternary structure, homodimer.

It localises to the cytoplasm. It catalyses the reaction tRNA(Tyr) + L-tyrosine + ATP = L-tyrosyl-tRNA(Tyr) + AMP + diphosphate + H(+). Catalyzes the attachment of tyrosine to tRNA(Tyr) in a two-step reaction: tyrosine is first activated by ATP to form Tyr-AMP and then transferred to the acceptor end of tRNA(Tyr). This Neisseria gonorrhoeae (strain ATCC 700825 / FA 1090) protein is Tyrosine--tRNA ligase.